The sequence spans 237 residues: Peptidase E (237 aa).

Residues serine 122, aspartate 137, and histidine 159 each act as charge relay system in the active site.

It belongs to the peptidase S51 family.

The protein resides in the cytoplasm. The catalysed reaction is Dipeptidase E catalyzes the hydrolysis of dipeptides Asp-|-Xaa. It does not act on peptides with N-terminal Glu, Asn or Gln, nor does it cleave isoaspartyl peptides.. Functionally, hydrolyzes dipeptides containing N-terminal aspartate residues. May play a role in allowing the cell to use peptide aspartate to spare carbon otherwise required for the synthesis of the aspartate family of amino acids. The sequence is that of Peptidase E from Shewanella baltica (strain OS155 / ATCC BAA-1091).